The chain runs to 574 residues: Glycine--tRNA ligase (574 aa).

Substrate-binding residues include R96 and E162. Residues 194–196 (RNE), 204–209 (IRLREF), 327–328 (EC), and 450–453 (GIDR) each bind ATP. 209-213 (FTQAE) is a substrate binding site. A substrate-binding site is contributed by 446–450 (EPSYG).

This sequence belongs to the class-II aminoacyl-tRNA synthetase family.

It localises to the cytoplasm. It catalyses the reaction tRNA(Gly) + glycine + ATP = glycyl-tRNA(Gly) + AMP + diphosphate. In terms of biological role, catalyzes the attachment of glycine to tRNA(Gly). The protein is Glycine--tRNA ligase of Methanococcus maripaludis (strain C7 / ATCC BAA-1331).